The primary structure comprises 237 residues: Phosphoribosylaminoimidazole-succinocarboxamide synthase (237 aa).

This sequence belongs to the SAICAR synthetase family.

The catalysed reaction is 5-amino-1-(5-phospho-D-ribosyl)imidazole-4-carboxylate + L-aspartate + ATP = (2S)-2-[5-amino-1-(5-phospho-beta-D-ribosyl)imidazole-4-carboxamido]succinate + ADP + phosphate + 2 H(+). The protein operates within purine metabolism; IMP biosynthesis via de novo pathway; 5-amino-1-(5-phospho-D-ribosyl)imidazole-4-carboxamide from 5-amino-1-(5-phospho-D-ribosyl)imidazole-4-carboxylate: step 1/2. This Pseudomonas fluorescens (strain Pf0-1) protein is Phosphoribosylaminoimidazole-succinocarboxamide synthase.